Reading from the N-terminus, the 247-residue chain is Triosephosphate isomerase (247 aa).

Substrate-binding residues include Asn10 and Lys12. The active-site Electrophile is His94. Glu164 acts as the Proton acceptor in catalysis.

The protein belongs to the triosephosphate isomerase family. Homodimer.

The enzyme catalyses D-glyceraldehyde 3-phosphate = dihydroxyacetone phosphate. The protein operates within carbohydrate biosynthesis; gluconeogenesis. Its pathway is carbohydrate degradation; glycolysis; D-glyceraldehyde 3-phosphate from glycerone phosphate: step 1/1. In Culex tarsalis (Encephalitis mosquito), this protein is Triosephosphate isomerase (Tpi).